Consider the following 609-residue polypeptide: Elongation factor 4 (609 aa).

The region spanning 11–193 is the tr-type G domain; sequence ERIRNFSIIA…QIVEKIPAPS (183 aa). Residues 23–28 and 140–143 each bind GTP; these read DHGKST and NKID.

Belongs to the TRAFAC class translation factor GTPase superfamily. Classic translation factor GTPase family. LepA subfamily.

It localises to the cell membrane. It carries out the reaction GTP + H2O = GDP + phosphate + H(+). Functionally, required for accurate and efficient protein synthesis under certain stress conditions. May act as a fidelity factor of the translation reaction, by catalyzing a one-codon backward translocation of tRNAs on improperly translocated ribosomes. Back-translocation proceeds from a post-translocation (POST) complex to a pre-translocation (PRE) complex, thus giving elongation factor G a second chance to translocate the tRNAs correctly. Binds to ribosomes in a GTP-dependent manner. The chain is Elongation factor 4 from Geobacillus thermodenitrificans (strain NG80-2).